The primary structure comprises 351 residues: Histidinol-phosphate aminotransferase 2 (351 aa).

Lysine 210 bears the N6-(pyridoxal phosphate)lysine mark.

It belongs to the class-II pyridoxal-phosphate-dependent aminotransferase family. Histidinol-phosphate aminotransferase subfamily. In terms of assembly, homodimer. Requires pyridoxal 5'-phosphate as cofactor.

The catalysed reaction is L-histidinol phosphate + 2-oxoglutarate = 3-(imidazol-4-yl)-2-oxopropyl phosphate + L-glutamate. The protein operates within amino-acid biosynthesis; L-histidine biosynthesis; L-histidine from 5-phospho-alpha-D-ribose 1-diphosphate: step 7/9. This chain is Histidinol-phosphate aminotransferase 2 (hisC2), found in Rhizobium meliloti (strain 1021) (Ensifer meliloti).